A 93-amino-acid polypeptide reads, in one-letter code: Parbolysin P1 (93 aa).

3 cysteine pairs are disulfide-bonded: Cys16-Cys37, Cys22-Cys33, and Cys47-Cys60.

It belongs to the worm cytolysin family. Localized within the skin and proboscis and are most readily isolated from body mucus secretions.

It is found in the secreted. Cytolysin that shows hemolytic activity (on bovine erythrocytes, HC(50)=5.75 mg/ml). This hemolytic activity is completely inhibited by small unilamelar vesicles composed of PC/PG, PC/PI and PC/PS in 1:1 molar ratios (with at least 100 mg/ml concentration). The recombinant protein does not show hemolytic activity, suggesting that it is not properly folded or that it requires a free N-terminal end for its activity. The polypeptide is Parbolysin P1 (Parborlasia corrugatus (Antarctic nemertean worm)).